We begin with the raw amino-acid sequence, 149 residues long: D-aminoacyl-tRNA deacylase (149 aa).

The Gly-cisPro motif, important for rejection of L-amino acids signature appears at 137–138; that stretch reads GP.

The protein belongs to the DTD family. As to quaternary structure, homodimer.

Its subcellular location is the cytoplasm. The catalysed reaction is glycyl-tRNA(Ala) + H2O = tRNA(Ala) + glycine + H(+). The enzyme catalyses a D-aminoacyl-tRNA + H2O = a tRNA + a D-alpha-amino acid + H(+). Functionally, an aminoacyl-tRNA editing enzyme that deacylates mischarged D-aminoacyl-tRNAs. Also deacylates mischarged glycyl-tRNA(Ala), protecting cells against glycine mischarging by AlaRS. Acts via tRNA-based rather than protein-based catalysis; rejects L-amino acids rather than detecting D-amino acids in the active site. By recycling D-aminoacyl-tRNA to D-amino acids and free tRNA molecules, this enzyme counteracts the toxicity associated with the formation of D-aminoacyl-tRNA entities in vivo and helps enforce protein L-homochirality. This is D-aminoacyl-tRNA deacylase from Caldicellulosiruptor saccharolyticus (strain ATCC 43494 / DSM 8903 / Tp8T 6331).